The primary structure comprises 31 residues: Putative translational regulatory protein ArgL (31 aa).

May serve a regulatory role in expression of downstream gene argF; in an argL-argF-lacZ fusion mutation of the start codon to a stop codon in argL increases expression of beta-galactosidase. This is Putative translational regulatory protein ArgL from Escherichia coli (strain K12).